Here is a 275-residue protein sequence, read N- to C-terminus: 2,3,4,5-tetrahydropyridine-2,6-dicarboxylate N-succinyltransferase (275 aa).

Substrate-binding residues include Arg108 and Asp145.

Belongs to the transferase hexapeptide repeat family. As to quaternary structure, homotrimer.

The protein localises to the cytoplasm. It catalyses the reaction (S)-2,3,4,5-tetrahydrodipicolinate + succinyl-CoA + H2O = (S)-2-succinylamino-6-oxoheptanedioate + CoA. It functions in the pathway amino-acid biosynthesis; L-lysine biosynthesis via DAP pathway; LL-2,6-diaminopimelate from (S)-tetrahydrodipicolinate (succinylase route): step 1/3. This chain is 2,3,4,5-tetrahydropyridine-2,6-dicarboxylate N-succinyltransferase, found in Maricaulis maris (strain MCS10) (Caulobacter maris).